A 150-amino-acid polypeptide reads, in one-letter code: FAD synthase (150 aa).

Residues 10–11, 15–18, Asp97, and Tyr124 each bind ATP; these read VF and HPGH.

It belongs to the archaeal FAD synthase family. As to quaternary structure, homodimer. Requires a divalent metal cation as cofactor.

It carries out the reaction FMN + ATP + H(+) = FAD + diphosphate. It participates in cofactor biosynthesis; FAD biosynthesis; FAD from FMN: step 1/1. In terms of biological role, catalyzes the transfer of the AMP portion of ATP to flavin mononucleotide (FMN) to produce flavin adenine dinucleotide (FAD) coenzyme. This Methanopyrus kandleri (strain AV19 / DSM 6324 / JCM 9639 / NBRC 100938) protein is FAD synthase.